Consider the following 150-residue polypeptide: Macrodomain Ter protein (150 aa).

The protein belongs to the MatP family. In terms of assembly, homodimer.

It localises to the cytoplasm. Its function is as follows. Required for spatial organization of the terminus region of the chromosome (Ter macrodomain) during the cell cycle. Prevents early segregation of duplicated Ter macrodomains during cell division. Binds specifically to matS, which is a 13 bp signature motif repeated within the Ter macrodomain. The sequence is that of Macrodomain Ter protein from Escherichia coli O8 (strain IAI1).